The sequence spans 691 residues: Ribonucleoprotein PTB-binding 2 (691 aa).

The span at 1-30 (MAAAAGDGGGEGGAGLGSAAGLGPGPGLRG) shows a compositional bias: gly residues. The segment at 1-47 (MAAAAGDGGGEGGAGLGSAAGLGPGPGLRGQGPSAEAHEGAPDPMPA) is disordered. The residue at position 2 (Ala-2) is an N-acetylalanine. RRM domains follow at residues 69 to 140 (RKIL…LQPT), 142 to 220 (ALLC…WMDV), and 231 to 309 (KCLC…FCAP). Disordered stretches follow at residues 492 to 522 (PNQHIAGQAGPGHSNTQEKQPATVGMAEGNF) and 543 to 574 (GHHKQQQSQPKGTEISSGAASKNQTSLLGEPP). Over residues 548–569 (QQSQPKGTEISSGAASKNQTSL) the composition is skewed to polar residues.

In terms of assembly, interacts with PTBP1 and RAVER1.

It localises to the nucleus. The protein resides in the cytoplasm. In terms of biological role, may bind single-stranded nucleic acids. The protein is Ribonucleoprotein PTB-binding 2 (RAVER2) of Homo sapiens (Human).